A 901-amino-acid polypeptide reads, in one-letter code: HTH-type transcriptional regulator MalT (901 aa).

39-46 (SPAGYGKT) contributes to the ATP binding site. Positions 829–894 (ELIRTSPLTQ…DAVQHAQQLL (66 aa)) constitute an HTH luxR-type domain. Residues 853–872 (NEQIAGELEVAATTIKTHIR) constitute a DNA-binding region (H-T-H motif).

It belongs to the MalT family. As to quaternary structure, monomer in solution. Oligomerizes to an active state in the presence of the positive effectors ATP and maltotriose.

Activated by ATP and maltotriose, which are both required for DNA binding. In terms of biological role, positively regulates the transcription of the maltose regulon whose gene products are responsible for uptake and catabolism of malto-oligosaccharides. Specifically binds to the promoter region of its target genes, recognizing a short DNA motif called the MalT box. This chain is HTH-type transcriptional regulator MalT, found in Escherichia coli (strain K12 / MC4100 / BW2952).